Reading from the N-terminus, the 819-residue chain is Pentatricopeptide repeat-containing protein At5g02860 (819 aa).

The disordered stretch occupies residues 57 to 93 (QNPNSRQPISSQTSRNRNRTRIGKSRDPNLGKPWSYH). PPR repeat units lie at residues 172–206 (DNSVVAIIISMLGKEGRVSSAANMFNGLQEDGFSL), 207–241 (DVYSYTSLISAFANSGRYREAVNVFKKMEEDGCKP), 242–277 (TLITYNVILNVFGKMGTPWNKITSLVEKMKSDGIAP), 278–312 (DAYTYNTLITCCKRGSLHQEAAQVFEEMKAAGFSY), 313–347 (DKVTYNALLDVYGKSHRPKEAMKVLNEMVLNGFSP), 348–382 (SIVTYNSLISAYARDGMLDEAMELKNQMAEKGTKP), 383–417 (DVFTYTTLLSGFERAGKVESAMSIFEEMRNAGCKP), 418–452 (NICTFNAFIKMYGNRGKFTEMMKIFDEINVCGLSP), 453–487 (DIVTWNTLLAVFGQNGMDSEVSGVFKEMKRAGFVP), 488–522 (ERETFNTLISAYSRCGSFEQAMTVYRRMLDAGVTP), 523–557 (DLSTYNTVLAALARGGMWEQSEKVLAEMEDGRCKP), 558–592 (NELTYCSLLHAYANGKEIGLMHSLAEEVYSGVIEP), 593–627 (RAVLLKTLVLVCSKCDLLPEAERAFSELKERGFSP), 628–662 (DITTLNSMVSIYGRRQMVAKANGVLDYMKERGFTP), 663–697 (SMATYNSLMYMHSRSADFGKSEEILREILAKGIKP), 698–732 (DIISYNTVIYAYCRNTRMRDASRIFSEMRNSGIVP), 733–767 (DVITYNTFIGSYAADSMFEEAIGVVRYMIKHGCRP), and 768–802 (NQNTYNSIVDGYCKLNRKDEAKLFVEDLRNLDPHA).

It belongs to the PPR family. P subfamily.

This is Pentatricopeptide repeat-containing protein At5g02860 from Arabidopsis thaliana (Mouse-ear cress).